Here is a 622-residue protein sequence, read N- to C-terminus: 1-deoxy-D-xylulose-5-phosphate synthase (622 aa).

Thiamine diphosphate-binding positions include His-71 and 112 to 114 (GHS). Asp-143 is a Mg(2+) binding site. Residues 144–145 (GA), Asn-172, Tyr-283, and Glu-363 each bind thiamine diphosphate. A Mg(2+)-binding site is contributed by Asn-172.

It belongs to the transketolase family. DXPS subfamily. In terms of assembly, homodimer. Requires Mg(2+) as cofactor. Thiamine diphosphate is required as a cofactor.

The catalysed reaction is D-glyceraldehyde 3-phosphate + pyruvate + H(+) = 1-deoxy-D-xylulose 5-phosphate + CO2. It participates in metabolic intermediate biosynthesis; 1-deoxy-D-xylulose 5-phosphate biosynthesis; 1-deoxy-D-xylulose 5-phosphate from D-glyceraldehyde 3-phosphate and pyruvate: step 1/1. In terms of biological role, catalyzes the acyloin condensation reaction between C atoms 2 and 3 of pyruvate and glyceraldehyde 3-phosphate to yield 1-deoxy-D-xylulose-5-phosphate (DXP). This is 1-deoxy-D-xylulose-5-phosphate synthase from Caldanaerobacter subterraneus subsp. tengcongensis (strain DSM 15242 / JCM 11007 / NBRC 100824 / MB4) (Thermoanaerobacter tengcongensis).